A 186-amino-acid chain; its full sequence is ATP synthase subunit delta (186 aa).

This sequence belongs to the ATPase delta chain family. As to quaternary structure, F-type ATPases have 2 components, F(1) - the catalytic core - and F(0) - the membrane proton channel. F(1) has five subunits: alpha(3), beta(3), gamma(1), delta(1), epsilon(1). CF(0) has four main subunits: a(1), b(1), b'(1) and c(10-14). The alpha and beta chains form an alternating ring which encloses part of the gamma chain. F(1) is attached to F(0) by a central stalk formed by the gamma and epsilon chains, while a peripheral stalk is formed by the delta, b and b' chains.

The protein localises to the cell inner membrane. Its function is as follows. F(1)F(0) ATP synthase produces ATP from ADP in the presence of a proton or sodium gradient. F-type ATPases consist of two structural domains, F(1) containing the extramembraneous catalytic core and F(0) containing the membrane proton channel, linked together by a central stalk and a peripheral stalk. During catalysis, ATP synthesis in the catalytic domain of F(1) is coupled via a rotary mechanism of the central stalk subunits to proton translocation. This protein is part of the stalk that links CF(0) to CF(1). It either transmits conformational changes from CF(0) to CF(1) or is implicated in proton conduction. The chain is ATP synthase subunit delta from Rhodopseudomonas palustris (strain BisB18).